The chain runs to 206 residues: Urease accessory protein UreG (206 aa).

Residue 13-20 (GPVGSGKT) participates in GTP binding.

This sequence belongs to the SIMIBI class G3E GTPase family. UreG subfamily. As to quaternary structure, homodimer. UreD, UreF and UreG form a complex that acts as a GTP-hydrolysis-dependent molecular chaperone, activating the urease apoprotein by helping to assemble the nickel containing metallocenter of UreC. The UreE protein probably delivers the nickel.

Its subcellular location is the cytoplasm. In terms of biological role, facilitates the functional incorporation of the urease nickel metallocenter. This process requires GTP hydrolysis, probably effectuated by UreG. This Haloquadratum walsbyi (strain DSM 16790 / HBSQ001) protein is Urease accessory protein UreG.